The following is a 348-amino-acid chain: MIPATYTLSQITARLGGEWRGEDISVTAVRPLADAQAEHISFLANPKYKAEVHDSSAGAVIVSAKAADGFEGRNLIVADDPYLYFAKVARLFSPVVKARGGIHPTAVVEPSATVPASCEIGANAYIGANTVLGEGCRILANAVVQHDCKLGDEVVLHPNAVVYYGCTLGRRVEIHSGAVIGADGFGLAFAGDSWFKIPQTGAVTLGDDVEIGSNTNIDRGAMSDTTVGNGTKIDNQVQIGHNCKIGSHTVIAAKTGISGSVTIGSYCIIGGGVGTVGHIEIADKTTIGGGTSVTHSITESGKHLAGIFPMSTHKEWARNAVYIHRLSEMNKRLKTLEQQLSDAGQDSK.

The active-site Proton acceptor is H241.

Belongs to the transferase hexapeptide repeat family. LpxD subfamily. In terms of assembly, homotrimer.

The enzyme catalyses a UDP-3-O-[(3R)-3-hydroxyacyl]-alpha-D-glucosamine + a (3R)-hydroxyacyl-[ACP] = a UDP-2-N,3-O-bis[(3R)-3-hydroxyacyl]-alpha-D-glucosamine + holo-[ACP] + H(+). It functions in the pathway bacterial outer membrane biogenesis; LPS lipid A biosynthesis. Functionally, catalyzes the N-acylation of UDP-3-O-acylglucosamine using 3-hydroxyacyl-ACP as the acyl donor. Is involved in the biosynthesis of lipid A, a phosphorylated glycolipid that anchors the lipopolysaccharide to the outer membrane of the cell. This is UDP-3-O-acylglucosamine N-acyltransferase from Neisseria meningitidis serogroup C / serotype 2a (strain ATCC 700532 / DSM 15464 / FAM18).